Reading from the N-terminus, the 1558-residue chain is ABC transporter NFT1 (1558 aa).

Topologically, residues 1 to 29 (MIKNGTCPFWERDDLSECARREYIEFKFP) are extracellular. N-linked (GlcNAc...) asparagine glycosylation occurs at Asn-4. A helical transmembrane segment spans residues 30 to 50 (LFILLTGMIYAFCKVFRAFYL). Over 51–103 (RRKNHTNEAPEFEEQGNGNHEYARFSVLRLKSAWESRSFCNVNNRSTFDKFKK) the chain is Cytoplasmic. Residues 104-124 (FIEGAFIVLQLTIHLYILSNM) traverse the membrane as a helical segment. Residues 125–130 (PMDNKK) are Extracellular-facing. The chain crosses the membrane as a helical span at residues 131-151 (FFHQGFLVQMFLWILLLVVIT). Residues 152 to 169 (LRLISASQSFRWVLACKR) lie on the Cytoplasmic side of the membrane. Residues 170–190 (DLWAVSFYSYASLFTLSILPL) form a helical membrane-spanning segment. Topologically, residues 191–201 (RSVFIGKIKDK) are extracellular. A helical membrane pass occupies residues 202 to 222 (IMVKYIISETFIDLALLLLLS). Topologically, residues 223–302 (TSSIEGTRYS…SSKKGRLLPN (80 aa)) are cytoplasmic. The chain crosses the membrane as a helical span at residues 303–323 (IICYFKAVFISQLFLAFVSSF). One can recognise an ABC transmembrane type-1 1 domain in the interval 311–621 (FISQLFLAFV…IASTVSLLIQ (311 aa)). Residues 324 to 351 (LNFVPSLLMPRILSYVNDPKSQSWNLVS) lie on the Extracellular side of the membrane. Residues 352–374 (LYVSSMLVSKIIATTCRGQGLFL) form a helical membrane-spanning segment. At 375–449 (GEKGTMQLRT…VMSIDAFKVS (75 aa)) the chain is on the cytoplasmic side. Positions 410–434 (NASTSFEENPDSSEAEPRKKSSRKD) are disordered. Residues 424 to 434 (AEPRKKSSRKD) are compositionally biased toward basic and acidic residues. Residues 450-470 (EAMNTFYLACEAVFMTVTALM) traverse the membrane as a helical segment. Topologically, residues 471–481 (ILYSLLGWSAF) are extracellular. Residues 482–504 (AGTFALLAMIPLNFWCATFYGNY) traverse the membrane as a helical segment. Residues 505-558 (QADQLILTDKRTSGISEALNSIRVIKLLAWENLFYQKIINVRDGEIRLLKKKAT) are Cytoplasmic-facing. The chain crosses the membrane as a helical span at residues 559–579 (IFFLNHLIWFFGPTLVSAITF). The Extracellular portion of the chain corresponds to 580-584 (SVFIK). The helical transmembrane segment at 585–605 (FQNQTLTPTIAFTALSLFAIL) threads the bilayer. At 606-953 (RTPMDQIAST…KFSAYKWLAD (348 aa)) the chain is on the cytoplasmic side. The ABC transporter 1 domain maps to 651–892 (FGFEDASMEW…NEFLRESINN (242 aa)). ATP is bound at residue 686–693 (GPTGSGKS). The span at 892-901 (NDSKNTTHNQ) shows a compositional bias: polar residues. A disordered region spans residues 892–926 (NDSKNTTHNQIDLKRSTTSKKTKNGDPEGENSQDE). Residues 954-974 (YFGGLGVVFVFTSSAILIHGI) traverse the membrane as a helical segment. The 291-residue stretch at 961–1251 (VFVFTSSAIL…IIKVFSSVEL (291 aa)) folds into the ABC transmembrane type-1 2 domain. At 975 to 1013 (TLSQGFWLRYWLETGSSGSKSTWLYRIVEGHSNIYFILT) the chain is on the extracellular side. The chain crosses the membrane as a helical span at residues 1014–1034 (YIVIGFVSSFLTSGKVWIAII). The Cytoplasmic segment spans residues 1035-1082 (SGTNVTKKIFAKLLSSILYAKLRFHNVTPTGRIMNRFSKDMDIIDQQL). Residues 1083-1105 (IPNFEGLSYSVVVCLWIILLIGY) traverse the membrane as a helical segment. The Extracellular portion of the chain corresponds to 1106 to 1109 (VTPQ). Residues 1110–1132 (FLLFAIPLCALYYTVCTLYLRAS) form a helical membrane-spanning segment. The Cytoplasmic portion of the chain corresponds to 1133-1199 (RELKRIDNIN…ATEWITYRVD (67 aa)). A helical membrane pass occupies residues 1200–1220 (IIGTLVLFSSSVMIIMKASYL). The Extracellular portion of the chain corresponds to 1221–1222 (DA). Residues 1223–1243 (GLAGILLSNAFSFTETAQWII) form a helical membrane-spanning segment. Residues 1244–1558 (KVFSSVELLM…LAKVSFDNKR (315 aa)) are Cytoplasmic-facing. The ABC transporter 2 domain occupies 1285–1538 (VELKNLSLRY…RNTIFYRLCR (254 aa)). Position 1319-1326 (1319-1326 (GRTGAGKS)) interacts with ATP.

The protein belongs to the ABC transporter superfamily. ABCC family. Conjugate transporter (TC 3.A.1.208) subfamily.

The protein resides in the membrane. The protein is ABC transporter NFT1 (NFT1) of Saccharomyces cerevisiae (strain YJM789) (Baker's yeast).